The primary structure comprises 423 residues: Tumor necrosis factor receptor superfamily member 19 (423 aa).

Positions 1–29 are cleaved as a signal peptide; the sequence is MALKVLLEQEKTFFTLLVLLGYLSCKVTC. Over 30 to 170 the chain is Extracellular; it reads ESGDCRQQEF…TASSPRDTAL (141 aa). TNFR-Cys repeat units follow at residues 33-72, 74-114, and 116-149; these read DCRQQEFRDRSGNCVPCNQCGPGMELSKECGFGYGEDAQC, TCRL…DAIC, and DCLPGFYRKTKLVGFQDMECVPCGDPPPPYEPHC. Intrachain disulfides connect Cys34–Cys46, Cys49–Cys62, Cys52–Cys72, Cys75–Cys89, Cys92–Cys106, Cys95–Cys114, Cys117–Cys135, and Cys138–Cys149. Residue Asn105 is glycosylated (N-linked (GlcNAc...) asparagine). A helical membrane pass occupies residues 171-191; sequence AAVICSALATVLLALLILCVI. Topologically, residues 192–423 are cytoplasmic; the sequence is YCKRQFMEKK…LQVRQRLGSL (232 aa).

In terms of assembly, associates with TRAF1, TRAF2, TRAF3 and TRAF5. Interacts with LINGO1. As to expression, highly expressed in prostate. Detected at lower levels in thymus, spleen, testis, uterus, small intestine, colon and peripheral blood leukocytes.

It is found in the membrane. Can mediate activation of JNK and NF-kappa-B. May promote caspase-independent cell death. The sequence is that of Tumor necrosis factor receptor superfamily member 19 (TNFRSF19) from Homo sapiens (Human).